The chain runs to 209 residues: Guanylate kinase (209 aa).

Residues 9–188 (GIMLVMSSPS…SVQQIKSIFI (180 aa)) form the Guanylate kinase-like domain. 16–23 (SPSGGGKT) lines the ATP pocket.

This sequence belongs to the guanylate kinase family.

The protein localises to the cytoplasm. It carries out the reaction GMP + ATP = GDP + ADP. Essential for recycling GMP and indirectly, cGMP. The chain is Guanylate kinase from Ehrlichia ruminantium (strain Gardel).